A 185-amino-acid polypeptide reads, in one-letter code: Large ribosomal subunit protein uL5 (185 aa).

Belongs to the universal ribosomal protein uL5 family. Part of the 50S ribosomal subunit; part of the 5S rRNA/L5/L18/L25 subcomplex. Contacts the 5S rRNA and the P site tRNA. Forms a bridge to the 30S subunit in the 70S ribosome.

Functionally, this is one of the proteins that bind and probably mediate the attachment of the 5S RNA into the large ribosomal subunit, where it forms part of the central protuberance. In the 70S ribosome it contacts protein S13 of the 30S subunit (bridge B1b), connecting the 2 subunits; this bridge is implicated in subunit movement. Contacts the P site tRNA; the 5S rRNA and some of its associated proteins might help stabilize positioning of ribosome-bound tRNAs. The protein is Large ribosomal subunit protein uL5 of Bartonella tribocorum (strain CIP 105476 / IBS 506).